Consider the following 634-residue polypeptide: Probable potassium transport system protein Kup (634 aa).

The next 12 membrane-spanning stretches (helical) occupy residues 21–41 (LVIG…LYTL), 58–78 (VLGI…LKYV), 110–130 (MYVV…DGVI), 152–172 (PFVV…QRFG), 179–199 (AFGP…VYNM), 223–243 (WHAV…EALY), 258–278 (WQFV…ALML), 296–316 (ALYP…QALI), 348–368 (IYVP…VIGF), 377–397 (AYGV…IIYA), 403–423 (VPAP…CAFF), and 427–447 (IIKF…LFTL).

This sequence belongs to the HAK/KUP transporter (TC 2.A.72) family.

It is found in the cell inner membrane. The catalysed reaction is K(+)(in) + H(+)(in) = K(+)(out) + H(+)(out). Transport of potassium into the cell. Likely operates as a K(+):H(+) symporter. This is Probable potassium transport system protein Kup from Xanthomonas euvesicatoria pv. vesicatoria (strain 85-10) (Xanthomonas campestris pv. vesicatoria).